The following is a 592-amino-acid chain: Protein phosphatase EYA1 (592 aa).

Disordered regions lie at residues 1–95 (MEMQ…RPYP) and 240–320 (MTSS…PDSD). The span at 8-26 (SPHSRLSGSSESPSGPKLG) shows a compositional bias: low complexity. The span at 28–63 (SHINSNSMTPNGTEVKTEPMSSSETASTTADGSLNN) shows a compositional bias: polar residues. 2 stretches are compositionally biased toward low complexity: residues 64–75 (FSGSAIGSSSFS) and 241–253 (TSSN…PSTN). The segment covering 254-287 (ATYQLQEPPSGITSQAVTDPTAEYSTIHSPSTPI) has biased composition (polar residues). Residues 288-303 (KDSDSDRLRRGSDGKS) are compositionally biased toward basic and acidic residues. Aspartate 328 (nucleophile) is an active-site residue. Mg(2+) contacts are provided by aspartate 328, aspartate 330, and aspartate 556. The active-site Proton donor is the aspartate 330.

It belongs to the HAD-like hydrolase superfamily. EYA family. As to quaternary structure, probably interacts with SIX2, SIX4 and SIX5. Interacts with H2AX in response to DNA damage. Interacts with SIX3; promotes EYA1 translocation to the nucleus. The cofactor is Mg(2+). In terms of processing, sumoylated with SUMO1. In the embryo, highly expressed in kidney with lower levels in brain. Weakly expressed in lung. In the adult, highly expressed in heart and skeletal muscle. Weakly expressed in brain and liver. No expression in eye or kidney.

It localises to the cytoplasm. The protein localises to the nucleus. The enzyme catalyses O-phospho-L-tyrosyl-[protein] + H2O = L-tyrosyl-[protein] + phosphate. It carries out the reaction O-phospho-L-seryl-[protein] + H2O = L-seryl-[protein] + phosphate. The catalysed reaction is O-phospho-L-threonyl-[protein] + H2O = L-threonyl-[protein] + phosphate. Functionally, functions both as protein phosphatase and as transcriptional coactivator for SIX1, and probably also for SIX2, SIX4 and SIX5. Tyrosine phosphatase that dephosphorylates 'Tyr-142' of histone H2AX (H2AXY142ph) and promotes efficient DNA repair via the recruitment of DNA repair complexes containing MDC1. 'Tyr-142' phosphorylation of histone H2AX plays a central role in DNA repair and acts as a mark that distinguishes between apoptotic and repair responses to genotoxic stress. Its function as histone phosphatase may contribute to its function in transcription regulation during organogenesis. Also has phosphatase activity with proteins phosphorylated on Ser and Thr residues (in vitro). Required for normal embryonic development of the craniofacial and trunk skeleton, kidneys and ears. Together with SIX1, it plays an important role in hypaxial muscle development; in this it is functionally redundant with EYA2. The protein is Protein phosphatase EYA1 (EYA1) of Homo sapiens (Human).